The chain runs to 475 residues: Argininosuccinate lyase (475 aa).

Belongs to the lyase 1 family. Argininosuccinate lyase subfamily.

The protein localises to the cytoplasm. It carries out the reaction 2-(N(omega)-L-arginino)succinate = fumarate + L-arginine. The protein operates within amino-acid biosynthesis; L-arginine biosynthesis; L-arginine from L-ornithine and carbamoyl phosphate: step 3/3. The polypeptide is Argininosuccinate lyase (Leifsonia xyli subsp. xyli (strain CTCB07)).